The following is a 499-amino-acid chain: Lipopolysaccharide core galacturonosyltransferase RgtA (499 aa).

10 consecutive transmembrane segments (helical) span residues 11–31 (TAGLLLAAYFVLNIVLRIVLP), 74–94 (IGALIVPKNILLFLSYLFYGL), 103–123 (EALAAVGMLALITLPQVSYMA), 125–145 (QDLTHTTALLFASSLFLYGFF), 165–185 (IGLISKYNFALMPVVALIAIL), 199–219 (MLAAITVALVIVLPHAVWLQG), 248–268 (LLAFLVAIIAFAALPVVIFAA), 291–311 (MMLASLAGIALIVLFTGSTTV), 316–336 (LDPFLLVLPIYFLAKMQAAGL), and 351–371 (VLMACVLIALGFRVVGAGLIG).

The protein belongs to the glycosyltransferase 83 family.

The protein resides in the cell inner membrane. The protein operates within bacterial outer membrane biogenesis; LPS core biosynthesis. Involved in the modification of the lipopolysaccharide (LPS) inner core. Catalyzes the transfer of a galacturonic acid (GalA) residue to the 4-position of the outer Kdo (3-deoxy-D-manno-octulosonic acid) residue of the LPS inner core, using dodecaprenyl phosphate-GalA as the donor substrate. GalA addition by RgtA is required for RgtB activity. This chain is Lipopolysaccharide core galacturonosyltransferase RgtA, found in Rhizobium johnstonii (strain DSM 114642 / LMG 32736 / 3841) (Rhizobium leguminosarum bv. viciae).